A 320-amino-acid chain; its full sequence is MEIQFLGTGAGSPSKSRNVSSLALKLLDERNEVWLFDAGEGTQHQILQTAIRPRKIAKVFITHLHGDHIFGLPGFLASRSNQGGTDPLTIYGPSGIEDFVKTSLKVSQSHLSYPLKFVLLQHPGVAFEDQTFKVTFDRLDHRITSFGFRIEEKPHPGELLIDKVRAAKIPSGPVYAALKAGETVTLPDGRIFDGHDFIGPAQPGRTVAIFGDTRMCNRALPLAAGADVLVHESTFGPDESQLAKQYYHATNVQAAALAKRAGVGRLLLNHISARYLSPGVAMLEKTARQIFPNTHVVKDFEEINIPFRSEQSEPAVTVKS.

Zn(2+) contacts are provided by histidine 63, histidine 65, aspartate 67, histidine 68, histidine 141, aspartate 212, and histidine 270. Aspartate 67 (proton acceptor) is an active-site residue.

This sequence belongs to the RNase Z family. As to quaternary structure, homodimer. Requires Zn(2+) as cofactor.

It catalyses the reaction Endonucleolytic cleavage of RNA, removing extra 3' nucleotides from tRNA precursor, generating 3' termini of tRNAs. A 3'-hydroxy group is left at the tRNA terminus and a 5'-phosphoryl group is left at the trailer molecule.. Functionally, zinc phosphodiesterase, which displays some tRNA 3'-processing endonuclease activity. Probably involved in tRNA maturation, by removing a 3'-trailer from precursor tRNA. The chain is Ribonuclease Z from Lacticaseibacillus casei (strain BL23) (Lactobacillus casei).